The primary structure comprises 126 residues: Fluoride-specific ion channel FluC 1 (126 aa).

3 helical membrane-spanning segments follow: residues 37–57 (HWGT…VLAL), 67–87 (IALL…TFVV), and 98–118 (LLAA…AAAA). Na(+)-binding residues include G77 and S80.

The protein belongs to the fluoride channel Fluc/FEX (TC 1.A.43) family.

It is found in the cell inner membrane. It carries out the reaction fluoride(in) = fluoride(out). Its activity is regulated as follows. Na(+) is not transported, but it plays an essential structural role and its presence is essential for fluoride channel function. Its function is as follows. Fluoride-specific ion channel. Important for reducing fluoride concentration in the cell, thus reducing its toxicity. In Parasynechococcus marenigrum (strain WH8102), this protein is Fluoride-specific ion channel FluC 1.